The chain runs to 685 residues: E3 ubiquitin ligase Rnf157 (685 aa).

A lipid anchor (N-myristoyl glycine) is attached at Gly2. Residues 276–315 form an RING-type zinc finger; that stretch reads ECVVCLSDVRDTLILPCRHLCLCNTCADTLRYQANNCPIC. Positions 329-332 match the D-box 1 motif; that stretch reads RKKL. 3 disordered regions span residues 339 to 361, 433 to 584, and 650 to 672; these read SFNP…ENIP, LSKS…AGEQ, and LGGR…EASA. Low complexity predominate over residues 434-443; the sequence is SKSISQNSSV. Positions 478-537 are enriched in polar residues; sequence ESENLTLSSSGAVDQSSCTGTPLSSTISSPEDPASSSLAQSVMSMASSQISTDTVSSMSG. The span at 552-561 shows a compositional bias: low complexity; it reads PSPRAASRAP. Residues 657–660 carry the D-box 2 motif; that stretch reads ARPR.

As to quaternary structure, interacts with APBB1. Interacts with CHD1; CHD1-binding controls RNF157 stability. Also interacts with ATRN, MEGF8, TECR, MSI2, PLRG1, BYSL, MTERF3, PSMA1, MRPS18B, PRPF4, FASTKD2, SLC25A1, SMU1, CNOT9, MRPS2, MAGT1, FXR2, EMD, PSMD8, HDAC1, RAN, HSD17B12, TXNDC5 and MRPL19.

It is found in the cytoplasm. The catalysed reaction is S-ubiquitinyl-[E2 ubiquitin-conjugating enzyme]-L-cysteine + [acceptor protein]-L-lysine = [E2 ubiquitin-conjugating enzyme]-L-cysteine + N(6)-ubiquitinyl-[acceptor protein]-L-lysine.. Functionally, E3 ubiquitin ligase that ubiquitinates APBB1 for its degradation by the proteasome and thus prevents apoptosis and promotes survival of neurons. Has a dual role in neurons as it is also required for dendrite growth and maintenance for which its ligase activity is not critical. May act as a scaffold molecule to regulate this process. Acts as a downstream effector of the interconnected PI3K and MAPK signaling pathways and thus participates in the regulation of the cell cycle. In Mus musculus (Mouse), this protein is E3 ubiquitin ligase Rnf157 (Rnf157).